Reading from the N-terminus, the 94-residue chain is Co-chaperonin GroES (94 aa).

It belongs to the GroES chaperonin family. In terms of assembly, heptamer of 7 subunits arranged in a ring. Interacts with the chaperonin GroEL.

Its subcellular location is the cytoplasm. In terms of biological role, together with the chaperonin GroEL, plays an essential role in assisting protein folding. The GroEL-GroES system forms a nano-cage that allows encapsulation of the non-native substrate proteins and provides a physical environment optimized to promote and accelerate protein folding. GroES binds to the apical surface of the GroEL ring, thereby capping the opening of the GroEL channel. The sequence is that of Co-chaperonin GroES from Ehrlichia chaffeensis.